The following is a 565-amino-acid chain: Proline--tRNA ligase (565 aa).

This sequence belongs to the class-II aminoacyl-tRNA synthetase family. ProS type 1 subfamily. In terms of assembly, homodimer.

The protein localises to the cytoplasm. It catalyses the reaction tRNA(Pro) + L-proline + ATP = L-prolyl-tRNA(Pro) + AMP + diphosphate. Catalyzes the attachment of proline to tRNA(Pro) in a two-step reaction: proline is first activated by ATP to form Pro-AMP and then transferred to the acceptor end of tRNA(Pro). As ProRS can inadvertently accommodate and process non-cognate amino acids such as alanine and cysteine, to avoid such errors it has two additional distinct editing activities against alanine. One activity is designated as 'pretransfer' editing and involves the tRNA(Pro)-independent hydrolysis of activated Ala-AMP. The other activity is designated 'posttransfer' editing and involves deacylation of mischarged Ala-tRNA(Pro). The misacylated Cys-tRNA(Pro) is not edited by ProRS. This Francisella philomiragia subsp. philomiragia (strain ATCC 25017 / CCUG 19701 / FSC 153 / O#319-036) protein is Proline--tRNA ligase.